Consider the following 161-residue polypeptide: 6,7-dimethyl-8-ribityllumazine synthase (161 aa).

5-amino-6-(D-ribitylamino)uracil contacts are provided by residues Phe-23, 61–63 (SFE), and 85–87 (AVI). Position 90 to 91 (90 to 91 (DT)) interacts with (2S)-2-hydroxy-3-oxobutyl phosphate. The Proton donor role is filled by His-93. Phe-118 is a binding site for 5-amino-6-(D-ribitylamino)uracil. (2S)-2-hydroxy-3-oxobutyl phosphate is bound at residue Arg-132.

Belongs to the DMRL synthase family.

It carries out the reaction (2S)-2-hydroxy-3-oxobutyl phosphate + 5-amino-6-(D-ribitylamino)uracil = 6,7-dimethyl-8-(1-D-ribityl)lumazine + phosphate + 2 H2O + H(+). It participates in cofactor biosynthesis; riboflavin biosynthesis; riboflavin from 2-hydroxy-3-oxobutyl phosphate and 5-amino-6-(D-ribitylamino)uracil: step 1/2. Its function is as follows. Catalyzes the formation of 6,7-dimethyl-8-ribityllumazine by condensation of 5-amino-6-(D-ribitylamino)uracil with 3,4-dihydroxy-2-butanone 4-phosphate. This is the penultimate step in the biosynthesis of riboflavin. This Synechococcus sp. (strain WH7803) protein is 6,7-dimethyl-8-ribityllumazine synthase.